The chain runs to 230 residues: UPF0173 metal-dependent hydrolase TM1040_1920 (230 aa).

It belongs to the UPF0173 family.

The protein is UPF0173 metal-dependent hydrolase TM1040_1920 of Ruegeria sp. (strain TM1040) (Silicibacter sp.).